A 382-amino-acid chain; its full sequence is D-alanine--D-alanine ligase (382 aa).

The ATP-grasp domain maps to 161-372 (KVVFEAAGLQ…YAELIDELIY (212 aa)). 193-248 (VDRLGYPVFVKPARAGSSMGISKVDSLEGLDAAIAAAREHDLKLVIEAGIVGREIE) is an ATP binding site. Mg(2+) contacts are provided by Asp-326, Glu-339, and Asn-341.

This sequence belongs to the D-alanine--D-alanine ligase family. Mg(2+) serves as cofactor. Mn(2+) is required as a cofactor.

Its subcellular location is the cytoplasm. It carries out the reaction 2 D-alanine + ATP = D-alanyl-D-alanine + ADP + phosphate + H(+). It participates in cell wall biogenesis; peptidoglycan biosynthesis. Its function is as follows. Cell wall formation. The sequence is that of D-alanine--D-alanine ligase from Arthrobacter sp. (strain FB24).